A 212-amino-acid chain; its full sequence is NADH-quinone oxidoreductase subunit I (212 aa).

4Fe-4S ferredoxin-type domains follow at residues 76–105 (RLLE…IITD) and 115–144 (LNYS…HGDL). [4Fe-4S] cluster is bound by residues Cys85, Cys88, Cys91, Cys95, Cys124, Cys127, Cys130, and Cys134.

Belongs to the complex I 23 kDa subunit family. NDH-1 is composed of 14 different subunits. Subunits NuoA, H, J, K, L, M, N constitute the membrane sector of the complex. [4Fe-4S] cluster serves as cofactor.

It is found in the cell inner membrane. The enzyme catalyses a quinone + NADH + 5 H(+)(in) = a quinol + NAD(+) + 4 H(+)(out). Functionally, NDH-1 shuttles electrons from NADH, via FMN and iron-sulfur (Fe-S) centers, to quinones in the respiratory chain. The immediate electron acceptor for the enzyme in this species is believed to be ubiquinone. Couples the redox reaction to proton translocation (for every two electrons transferred, four hydrogen ions are translocated across the cytoplasmic membrane), and thus conserves the redox energy in a proton gradient. In Helicobacter hepaticus (strain ATCC 51449 / 3B1), this protein is NADH-quinone oxidoreductase subunit I.